A 206-amino-acid chain; its full sequence is High frequency lysogenization protein HflD homolog (206 aa).

Belongs to the HflD family.

It is found in the cytoplasm. The protein resides in the cell inner membrane. This is High frequency lysogenization protein HflD homolog from Marinobacter nauticus (strain ATCC 700491 / DSM 11845 / VT8) (Marinobacter aquaeolei).